Here is a 321-residue protein sequence, read N- to C-terminus: Transcription factor MYB60 (321 aa).

2 HTH myb-type domains span residues 9–65 (KVGI…RPGI) and 66–116 (KRGN…KKKI). DNA-binding regions (H-T-H motif) lie at residues 37–61 (WRSVPTNTGLLRCSKSCRLRWTNYL) and 89–112 (WAAIASYLPQRTDNDIKNYWNTHL). S-nitrosocysteine is present on residues C49 and C53. Disordered stretches follow at residues 196 to 215 (SPKATKEKLHQNSSLEEGSI) and 263 to 291 (HHQTTDATIPSDDHDHDHEMKMDHDQKKH). Residues 206–215 (QNSSLEEGSI) show a composition bias toward polar residues. Positions 273 to 290 (SDDHDHDHEMKMDHDQKK) are enriched in basic and acidic residues.

As to expression, restricted to stomatal guard cells. Mostly expressed in leaves, cotyledons, hypocotyls, seeds and ripened berry skins.

It is found in the nucleus. Functionally, transcription factor involved in the regulation of gene (e.g. drought-regulated and flavonoid biosynthetic genes) expression and stomatal movements leading to negative regulation of responses to drought and responses to other physiological stimuli (e.g. light). In Vitis vinifera (Grape), this protein is Transcription factor MYB60.